The primary structure comprises 239 residues: tRNA (guanine-N(7)-)-methyltransferase (239 aa).

Residues Glu-69, Glu-94, Asp-121, and Asp-144 each coordinate S-adenosyl-L-methionine. Residue Asp-144 is part of the active site. Lys-148 is a substrate binding site. An interaction with RNA region spans residues 150-155 (RHNKRR). Substrate is bound by residues Asp-180 and 217 to 220 (TKFE).

Belongs to the class I-like SAM-binding methyltransferase superfamily. TrmB family. Monomer.

The catalysed reaction is guanosine(46) in tRNA + S-adenosyl-L-methionine = N(7)-methylguanosine(46) in tRNA + S-adenosyl-L-homocysteine. It functions in the pathway tRNA modification; N(7)-methylguanine-tRNA biosynthesis. Functionally, catalyzes the formation of N(7)-methylguanine at position 46 (m7G46) in tRNA. The polypeptide is tRNA (guanine-N(7)-)-methyltransferase (Photorhabdus laumondii subsp. laumondii (strain DSM 15139 / CIP 105565 / TT01) (Photorhabdus luminescens subsp. laumondii)).